Here is a 285-residue protein sequence, read N- to C-terminus: Tryptophan synthase alpha chain (285 aa).

Residues glutamate 53 and aspartate 64 each act as proton acceptor in the active site.

This sequence belongs to the TrpA family. In terms of assembly, tetramer of two alpha and two beta chains.

The enzyme catalyses (1S,2R)-1-C-(indol-3-yl)glycerol 3-phosphate + L-serine = D-glyceraldehyde 3-phosphate + L-tryptophan + H2O. It functions in the pathway amino-acid biosynthesis; L-tryptophan biosynthesis; L-tryptophan from chorismate: step 5/5. The alpha subunit is responsible for the aldol cleavage of indoleglycerol phosphate to indole and glyceraldehyde 3-phosphate. The sequence is that of Tryptophan synthase alpha chain from Bordetella pertussis (strain Tohama I / ATCC BAA-589 / NCTC 13251).